Here is a 177-residue protein sequence, read N- to C-terminus: Protein GrpE (177 aa).

2 stretches are compositionally biased toward basic and acidic residues: residues 1–19 and 29–41; these read MAKH…KETV and SPEK…ANER. Residues 1–41 form a disordered region; the sequence is MAKHKHEEHPEDVEVKETVETAEQAESASPEKSELELANER.

It belongs to the GrpE family. Homodimer.

Its subcellular location is the cytoplasm. In terms of biological role, participates actively in the response to hyperosmotic and heat shock by preventing the aggregation of stress-denatured proteins, in association with DnaK and GrpE. It is the nucleotide exchange factor for DnaK and may function as a thermosensor. Unfolded proteins bind initially to DnaJ; upon interaction with the DnaJ-bound protein, DnaK hydrolyzes its bound ATP, resulting in the formation of a stable complex. GrpE releases ADP from DnaK; ATP binding to DnaK triggers the release of the substrate protein, thus completing the reaction cycle. Several rounds of ATP-dependent interactions between DnaJ, DnaK and GrpE are required for fully efficient folding. This is Protein GrpE from Streptococcus gordonii (strain Challis / ATCC 35105 / BCRC 15272 / CH1 / DL1 / V288).